A 37-amino-acid polypeptide reads, in one-letter code: Large ribosomal subunit protein bL36c (37 aa).

Belongs to the bacterial ribosomal protein bL36 family.

The protein resides in the plastid. The protein localises to the chloroplast. This chain is Large ribosomal subunit protein bL36c, found in Lepidium virginicum (Virginia pepperweed).